The chain runs to 55 residues: Ribosome biogenesis protein Nop10 (55 aa).

Belongs to the NOP10 family.

Its function is as follows. Involved in ribosome biogenesis; more specifically in 18S rRNA pseudouridylation and in cleavage of pre-rRNA. The protein is Ribosome biogenesis protein Nop10 of Methanosphaera stadtmanae (strain ATCC 43021 / DSM 3091 / JCM 11832 / MCB-3).